A 534-amino-acid chain; its full sequence is Arginine--tRNA ligase (534 aa).

Residues 120–130 (ANPTGFLHLGH) carry the 'HIGH' region motif.

The protein belongs to the class-I aminoacyl-tRNA synthetase family. As to quaternary structure, monomer.

The protein resides in the cytoplasm. The catalysed reaction is tRNA(Arg) + L-arginine + ATP = L-arginyl-tRNA(Arg) + AMP + diphosphate. This chain is Arginine--tRNA ligase, found in Mesomycoplasma hyopneumoniae (strain 7448) (Mycoplasma hyopneumoniae).